Reading from the N-terminus, the 501-residue chain is Putative ribose/galactose/methyl galactoside import ATP-binding protein 1 (501 aa).

ABC transporter domains are found at residues 5 to 237 and 249 to 492; these read VSLS…VGRQ and VPGE…MTRS. ATP is bound at residue 37 to 44; sequence GENGAGKS.

It belongs to the ABC transporter superfamily. Carbohydrate importer 2 (CUT2) (TC 3.A.1.2) family.

It localises to the cell inner membrane. It catalyses the reaction D-ribose(out) + ATP + H2O = D-ribose(in) + ADP + phosphate + H(+). The enzyme catalyses D-galactose(out) + ATP + H2O = D-galactose(in) + ADP + phosphate + H(+). Part of an ABC transporter complex involved in carbohydrate import. Could be involved in ribose, galactose and/or methyl galactoside import. Responsible for energy coupling to the transport system. This Rhizobium meliloti (strain 1021) (Ensifer meliloti) protein is Putative ribose/galactose/methyl galactoside import ATP-binding protein 1.